Consider the following 509-residue polypeptide: Erythropoietin receptor (509 aa).

The first 24 residues, 1–24 (MYHFGATLWPGVGSLCLLLAGATW), serve as a signal peptide directing secretion. At 25 to 251 (APSPNSPDAK…SLLTASDLDP (227 aa)) the chain is on the extracellular side. Disulfide bonds link Cys-52–Cys-62 and Cys-91–Cys-107. A Fibronectin type-III domain is found at 148-248 (PPAGLLARRA…EPASLLTASD (101 aa)). Asn-184 is a glycosylation site (N-linked (GlcNAc...) asparagine). A WSXWS motif motif is present at residues 234 to 238 (WSAWS). A helical membrane pass occupies residues 252–274 (LILTLSLILVLILLLLAVLALLS). The Cytoplasmic portion of the chain corresponds to 275–509 (HRRTLKQKIW…PSPPNYVTCS (235 aa)). Lys-282 participates in a covalent cross-link: Glycyl lysine isopeptide (Lys-Gly) (interchain with G-Cter in ubiquitin). Positions 283–291 (IWPGIPSPE) match the Box 1 motif motif. Residues Tyr-369 and Tyr-427 each carry the phosphotyrosine; by JAK2 modification. Positions 453 to 458 (LKYLYL) match the ITIM motif motif. Lys-454 is covalently cross-linked (Glycyl lysine isopeptide (Lys-Gly) (interchain with G-Cter in ubiquitin)). A phosphotyrosine; by JAK2 mark is found at Tyr-455, Tyr-457, Tyr-469, Tyr-486, Tyr-490, and Tyr-505. The disordered stretch occupies residues 467 to 509 (TDYSSGGSQETQGGSSSGPYSNPYENSLVPAPEPSPPNYVTCS). The segment covering 470–493 (SSGGSQETQGGSSSGPYSNPYENS) has biased composition (low complexity).

It belongs to the type I cytokine receptor family. Type 1 subfamily. Forms homodimers on EPO stimulation. The tyrosine-phosphorylated form interacts with several SH2 domain-containing proteins including LYN, the adapter protein SH2B2, PTPN6, PTPN11, JAK2, PI3 kinases, STAT5A/B, SOCS3, CRKL. Interacts with INPP5D/SHIP1. SH2B2 binding inhibits the JAK-STAT signaling. Interacts with RHEX; this interaction occurs in a erythropoietin (EPO)-dependent manner. Interacts with ATXN2L. On EPO stimulation, phosphorylated on C-terminal tyrosine residues by JAK2. The phosphotyrosine motifs are also recruitment sites for several SH2-containing proteins and adapter proteins which mediate cell proliferation. Phosphorylation on Tyr-455 is required for PTPN6 interaction, Tyr-427 for PTPN11. Tyr-427 is also required for SOCS3 binding, but Tyr-455/Tyr-457 motif is the preferred binding site. Post-translationally, ubiquitinated by the ECS(SOCS2) complex following ligand-binding and phosphorylation by JAK2, leading to its degradation by the proteasome. Regulation by the ECS(SOCS2) complex acts as a negative feedback loop of erythropoietin-mediated signaling pathway. Ubiquitination at Lys-282 mediates receptor internalization, whereas ubiquitination at Lys-454 promotes trafficking of activated receptors to the lysosomes for degradation. Ubiquitinated by NOSIP; appears to be either multi-monoubiquitinated or polyubiquitinated. Ubiquitination mediates proliferation and survival of EPO-dependent cells.

The protein localises to the cell membrane. Its function is as follows. Receptor for erythropoietin, which mediates erythropoietin-induced erythroblast proliferation and differentiation. Upon EPO stimulation, EPOR dimerizes triggering the JAK2/STAT5 signaling cascade. In some cell types, can also activate STAT1 and STAT3. May also activate the LYN tyrosine kinase. Isoform EPOR-T acts as a dominant-negative receptor of EPOR-mediated signaling. This Sus scrofa (Pig) protein is Erythropoietin receptor (EPOR).